Here is a 63-residue protein sequence, read N- to C-terminus: uncharacterized protein (63 aa).

Residues 1 to 15 (MGRNHIHKNRDKNKQ) show a composition bias toward basic residues. Residues 1–63 (MGRNHIHKNR…ADNRAKKKSR (63 aa)) are disordered. The span at 30–44 (GVYEEYSTELADADD) shows a compositional bias: acidic residues. A compositionally biased stretch (basic and acidic residues) spans 45–57 (REAQERAKAADNR).

This is an uncharacterized protein from Bacillus subtilis (strain 168).